Consider the following 517-residue polypeptide: Serine O-succinyltransferase (517 aa).

The N-terminal 46 residues, 1 to 46 (MSPLNGVARSLPRPFQAVARRPFRVAQPAVACPSNRRSFNHSRSLR), are a transit peptide targeting the mitochondrion. The tract at residues 34-66 (SNRRSFNHSRSLRSTGSQSPAPSPRDSSNPALS) is disordered. The segment covering 45–64 (LRSTGSQSPAPSPRDSSNPA) has biased composition (polar residues). The region spanning 134–386 (NVILLHTGLS…LTQQLATKKQ (253 aa)) is the AB hydrolase-1 domain. The segment at 141–144 (GLSA) is important for substrate specificity. The active-site Nucleophile is Ser-238. Arg-307 contributes to the substrate binding site. Positions 413 to 436 (QPYQEQPSASTSAEQSASASETGS) are disordered. The segment covering 416–436 (QEQPSASTSAEQSASASETGS) has biased composition (low complexity). Residues Asp-461 and His-498 contribute to the active site. Asp-499 is a substrate binding site.

Belongs to the AB hydrolase superfamily. MetX family.

The protein resides in the mitochondrion. It carries out the reaction succinyl-CoA + L-serine = O-succinyl-L-serine + CoA. It participates in amino-acid biosynthesis; L-cysteine biosynthesis; L-cysteine from L-serine: step 1/2. Transfers a succinyl group from succinyl-CoA to L-serine, forming succinyl-L-serine. Also has weak serine acetyl transferase activity and homoserine succinyl transferase activity. This Emericella nidulans (Aspergillus nidulans) protein is Serine O-succinyltransferase.